The chain runs to 134 residues: Profilin-3 (134 aa).

The cysteines at positions 13 and 118 are disulfide-linked. The short motif at 84 to 100 is the Involved in PIP2 interaction element; it reads AVIRGKKGSGGITIKKT. A Phosphothreonine modification is found at Thr114.

This sequence belongs to the profilin family. As to quaternary structure, occurs in many kinds of cells as a complex with monomeric actin in a 1:1 ratio. Post-translationally, phosphorylated by MAP kinases.

It is found in the cytoplasm. It localises to the cytoskeleton. In terms of biological role, binds to actin and affects the structure of the cytoskeleton. At high concentrations, profilin prevents the polymerization of actin, whereas it enhances it at low concentrations. The protein is Profilin-3 of Olea europaea (Common olive).